A 376-amino-acid chain; its full sequence is N-acetyldiaminopimelate deacetylase (376 aa).

The active site involves Asp69. The Proton acceptor role is filled by Glu128.

Belongs to the peptidase M20A family. N-acetyldiaminopimelate deacetylase subfamily.

It catalyses the reaction N-acetyl-(2S,6S)-2,6-diaminopimelate + H2O = (2S,6S)-2,6-diaminopimelate + acetate. The protein operates within amino-acid biosynthesis; L-lysine biosynthesis via DAP pathway; LL-2,6-diaminopimelate from (S)-tetrahydrodipicolinate (acetylase route): step 3/3. In terms of biological role, catalyzes the conversion of N-acetyl-diaminopimelate to diaminopimelate and acetate. This is N-acetyldiaminopimelate deacetylase from Streptococcus pneumoniae (strain JJA).